The following is a 457-amino-acid chain: 3-ketoacyl-CoA thiolase 5, peroxisomal (457 aa).

A peroxisome-targeting transit peptide spans 1 to 37 (MERAMERQKILLRHLNPVSSSNSSLKHEPSLLSPVNC). Cys-137 functions as the Acyl-thioester intermediate in the catalytic mechanism. Residues His-394 and Cys-426 each act as proton acceptor in the active site.

Belongs to the thiolase-like superfamily. Thiolase family. Homodimer. Expressed in seedlings and wounded leaves.

Its subcellular location is the peroxisome. The catalysed reaction is an acyl-CoA + acetyl-CoA = a 3-oxoacyl-CoA + CoA. The protein operates within lipid metabolism; fatty acid metabolism. Its function is as follows. Probably involved in long chain fatty-acid beta-oxidation prior to gluconeogenesis during germination and subsequent seedling growth. Involved in systemic jasmonic acid (JA) biosynthesis after wounding and may be during senescence. This Arabidopsis thaliana (Mouse-ear cress) protein is 3-ketoacyl-CoA thiolase 5, peroxisomal (KAT5).